A 154-amino-acid polypeptide reads, in one-letter code: Ribosome maturation factor RimP (154 aa).

This sequence belongs to the RimP family.

The protein localises to the cytoplasm. Required for maturation of 30S ribosomal subunits. This chain is Ribosome maturation factor RimP, found in Haemophilus ducreyi (strain 35000HP / ATCC 700724).